The following is a 712-amino-acid chain: Anaerobic ribonucleoside-triphosphate reductase (712 aa).

In terms of domain architecture, ATP-cone spans 3-92; sequence PHVMKRDGCK…EYRHDRDIQR (90 aa). One can recognise a Glycine radical domain in the interval 583 to 708; the sequence is KKVNPYDKID…VKRRVKHLGN (126 aa). Positions 644, 647, 662, and 665 each coordinate Zn(2+). Gly681 is subject to Glycine radical.

Belongs to the anaerobic ribonucleoside-triphosphate reductase family. In terms of assembly, forms a tetramer composed of two NrdD and two NrdG subunits.

The catalysed reaction is a ribonucleoside 5'-triphosphate + formate + H(+) = a 2'-deoxyribonucleoside 5'-triphosphate + CO2 + H2O. With respect to regulation, activated under anaerobic conditions by NrdG, a tightly associated activase. Activation involves the formation of a glycyl radical at Gly-681. In terms of biological role, catalyzes the conversion of ribonucleotides into deoxyribonucleotides, which are required for DNA synthesis and repair. This chain is Anaerobic ribonucleoside-triphosphate reductase (nrdD), found in Salmonella typhimurium (strain LT2 / SGSC1412 / ATCC 700720).